Here is a 166-residue protein sequence, read N- to C-terminus: Small ribosomal subunit protein uS5 (166 aa).

An S5 DRBM domain is found at 11–74 (LREKLVAINR…EKARANMKRV (64 aa)).

It belongs to the universal ribosomal protein uS5 family. As to quaternary structure, part of the 30S ribosomal subunit. Contacts proteins S4 and S8.

In terms of biological role, with S4 and S12 plays an important role in translational accuracy. Located at the back of the 30S subunit body where it stabilizes the conformation of the head with respect to the body. The sequence is that of Small ribosomal subunit protein uS5 from Alkalilimnicola ehrlichii (strain ATCC BAA-1101 / DSM 17681 / MLHE-1).